Consider the following 97-residue polypeptide: Essential MCU regulator, mitochondrial (97 aa).

The N-terminal 35 residues, 1–35 (MIVPRLALPISLALQRVSRRVAEHPHNLRILQRHM), are a transit peptide targeting the mitochondrion. Residues 53 to 73 (PFGLLAIFCAVIPGLFVGATI) form a helical membrane-spanning segment.

The protein belongs to the SMDT1/EMRE family.

The protein localises to the mitochondrion inner membrane. Essential regulatory subunit of the mitochondrial calcium uniporter MCU channel, a protein that mediates calcium uptake into mitochondria. The chain is Essential MCU regulator, mitochondrial from Drosophila melanogaster (Fruit fly).